The chain runs to 197 residues: Probable GTP-binding protein EngB (197 aa).

One can recognise an EngB-type G domain in the interval 24–197 (DIPEIALAGR…WDAILEKVNK (174 aa)). GTP contacts are provided by residues 32–39 (GRSNVGKS), 59–63 (GKTQL), 77–80 (DVPG), 144–147 (TKAD), and 176–178 (FSS). S39 and T61 together coordinate Mg(2+).

This sequence belongs to the TRAFAC class TrmE-Era-EngA-EngB-Septin-like GTPase superfamily. EngB GTPase family. It depends on Mg(2+) as a cofactor.

In terms of biological role, necessary for normal cell division and for the maintenance of normal septation. The chain is Probable GTP-binding protein EngB from Streptococcus gordonii (strain Challis / ATCC 35105 / BCRC 15272 / CH1 / DL1 / V288).